A 600-amino-acid chain; its full sequence is MFPRVVRLNSRLVSFALLGLQIANGAITYQHPDDLPSNVNYDFIVAGGGTAGLVVASRLSENSDWNILVIEAGPSNKDTPETRVPGLADSLPGSRTDWNYTTIPQDALGGRSLNYSRAKVLGGCSTHNGMVYTRGSEDDWNYWAEVTGDQALSWDSVLPIMKKAEKFSQDFSDQSVDGHIDPAVHGRDGLLSVVASYTNVSFNDLLLQTTKELSDEFPFKLDLNDGKPHELAWTQYTIDHNAERSSSATSYLETTGDNVHVLVNTHVTRIVSAGNGTNFRSVEFAVDSNSPKKVLQAKKELILSAGVIASPQVLMNSGIGGREELQAIGVDTLIDNPSVGKNLSDQAATLLMFDTTLPNTDYDVAAALTEWDKSRSGPMAHGARLNHLTWVRLPDDKLNGSDPSSGKDSPHIEFQFRQISHQLPPADVPNQVQLPDPDSIGVVLQFSVVNLYSISPGSVILNDNDPFANPMIDLNMFGDQKDIAILREGVRSARRMFSSPAFKDVINGTVYPPADVTSDEDLDAFLRTSAESYWHGVGTLSMSPQNASWGVVNPDFRVKGTSGLRVVDASVIPRAPAGHTQVPVYTFAEHASVLIAASYH.

An N-terminal signal peptide occupies residues 1 to 25 (MFPRVVRLNSRLVSFALLGLQIANG). N-linked (GlcNAc...) asparagine glycosylation is found at Asn99 and Asn114. His127 is subject to Tele-8alpha-FAD histidine. Asn199, Asn275, Asn342, Asn399, and Asn507 each carry an N-linked (GlcNAc...) asparagine glycan. The active-site Proton acceptor is His535. Residue Asn546 is glycosylated (N-linked (GlcNAc...) asparagine). The active site involves His579.

This sequence belongs to the GMC oxidoreductase family. As to quaternary structure, monomer. It depends on FAD as a cofactor. In terms of processing, N-glycosylated.

It localises to the secreted. The catalysed reaction is pyranose + acceptor = pyranos-2-ulose + reduced acceptor.. The enzyme catalyses pyranose + acceptor = pyranos-3-ulose + reduced acceptor.. It catalyses the reaction pyranose + acceptor = pyranos-2,3-diulose + reduced acceptor.. It carries out the reaction a pyranoside + acceptor = a pyranosid-3-ulose + reduced acceptor.. The catalysed reaction is a pyranoside + acceptor = a pyranosid-3,4-diulose + reduced acceptor.. Its function is as follows. Catalyzes the single-oxidation or sequential double oxidation reaction of carbohydrates primarily at carbon-2 and/or carbon-3 with the concomitant reduction of the flavin. The enzyme exhibits a broad sugar substrate specificity, oxidizing different aldopyranoses to the corresponding C-1, C-2, C-3 or C-1,2, C-2,3 and C-3,4 (di)dehydro sugars with substrate-specific regioselectivity. Accepts only a narrow range of electron acceptors such as substituted benzoquinones and complexed metal ions and reacts extremely slowly with O(2) as acceptor. May play a role in the natural recycling of plant matter by oxidizing all major monosaccharides in lignocellulose and by reducing quinone compounds or reactive radical species generated during lignin depolymerization. The protein is Pyranose dehydrogenase of Agaricus xanthodermus (Poison yellow meadow mushroom).